A 153-amino-acid polypeptide reads, in one-letter code: Endoribonuclease YbeY (153 aa).

The Zn(2+) site is built by His118, His122, and His128.

The protein belongs to the endoribonuclease YbeY family. Zn(2+) is required as a cofactor.

It is found in the cytoplasm. Single strand-specific metallo-endoribonuclease involved in late-stage 70S ribosome quality control and in maturation of the 3' terminus of the 16S rRNA. This is Endoribonuclease YbeY from Pelagibacter ubique (strain HTCC1062).